The following is a 353-amino-acid chain: Delta-aminolevulinic acid dehydratase (353 aa).

Lysine 221 serves as the catalytic Schiff-base intermediate with substrate. 2 residues coordinate 5-aminolevulinate: arginine 231 and lysine 244. A Mg(2+)-binding site is contributed by glutamate 260. The active-site Schiff-base intermediate with substrate is the lysine 275. Positions 301 and 340 each coordinate 5-aminolevulinate.

This sequence belongs to the ALAD family. As to quaternary structure, homooctamer. Mg(2+) serves as cofactor.

It catalyses the reaction 2 5-aminolevulinate = porphobilinogen + 2 H2O + H(+). It functions in the pathway porphyrin-containing compound metabolism; protoporphyrin-IX biosynthesis; coproporphyrinogen-III from 5-aminolevulinate: step 1/4. Its function is as follows. Catalyzes an early step in the biosynthesis of tetrapyrroles. Binds two molecules of 5-aminolevulinate per subunit, each at a distinct site, and catalyzes their condensation to form porphobilinogen. Required for nodule development. This is Delta-aminolevulinic acid dehydratase (hemB) from Bradyrhizobium diazoefficiens (strain JCM 10833 / BCRC 13528 / IAM 13628 / NBRC 14792 / USDA 110).